Consider the following 374-residue polypeptide: Guanine nucleotide-binding protein subunit alpha-15 (374 aa).

The G-alpha domain occupies 41 to 374; sequence GELKLLLLGP…ARYLDEINLL (334 aa). The segment at 44–57 is G1 motif; it reads KLLLLGPGESGKST. GTP is bound by residues 49–56, 183–189, 208–212, 277–280, and A346; these read GPGESGKS, LRSRMPT, DVGGQ, and NKTD. S56 is a binding site for Mg(2+). The interval 181–189 is G2 motif; the sequence is DVLRSRMPT. The residue at position 186 (R186) is an ADP-ribosylarginine; by cholera toxin. T189 serves as a coordination point for Mg(2+). The segment at 204–213 is G3 motif; it reads LRIVDVGGQK. A G4 motif region spans residues 273 to 280; the sequence is ILFLNKTD. A G5 motif region spans residues 344-349; that stretch reads TCATDT.

The protein belongs to the G-alpha family. G(q) subfamily. As to quaternary structure, g proteins are composed of 3 units; alpha, beta and gamma. The alpha chain contains the guanine nucleotide binding site. Specifically expressed in hematopoietic cells. Expressed in epididymis (at protein level).

Guanine nucleotide-binding proteins (G proteins) are involved as modulators or transducers in various transmembrane signaling systems. The protein is Guanine nucleotide-binding protein subunit alpha-15 (GNA15) of Homo sapiens (Human).